The sequence spans 376 residues: Ribonucleoside-diphosphate reductase subunit beta (376 aa).

Positions 85, 116, and 119 each coordinate Fe cation. Residue Y123 is part of the active site. Residues E205, E239, and H242 each contribute to the Fe cation site.

This sequence belongs to the ribonucleoside diphosphate reductase small chain family. As to quaternary structure, tetramer of two alpha and two beta subunits. Requires Fe cation as cofactor.

It carries out the reaction a 2'-deoxyribonucleoside 5'-diphosphate + [thioredoxin]-disulfide + H2O = a ribonucleoside 5'-diphosphate + [thioredoxin]-dithiol. Functionally, provides the precursors necessary for DNA synthesis. Catalyzes the biosynthesis of deoxyribonucleotides from the corresponding ribonucleotides. This Buchnera aphidicola subsp. Baizongia pistaciae (strain Bp) protein is Ribonucleoside-diphosphate reductase subunit beta (nrdB).